We begin with the raw amino-acid sequence, 707 residues long: Kinesin-like protein KIN-13B (707 aa).

The Kinesin motor domain maps to 152–477 (KIKVVVRKRP…LRYADRVKSL (326 aa)). 243–250 (GQTGSGKT) contacts ATP. A coiled-coil region spans residues 619 to 656 (EHLNELLQEEEDLVSAHRKQVEETLDMIKEEMNLLVEA).

Belongs to the TRAFAC class myosin-kinesin ATPase superfamily. Kinesin family. KIN-13 subfamily.

This chain is Kinesin-like protein KIN-13B, found in Oryza sativa subsp. japonica (Rice).